Reading from the N-terminus, the 265-residue chain is Putative cysteine-rich receptor-like protein kinase 9 (265 aa).

A signal peptide spans 1–23 (MSSLISFIFLFLFSFLTSFKASA). 2 Gnk2-homologous domains span residues 27-131 (FYLN…DKNI) and 142-244 (FILS…LYSF). N-linked (GlcNAc...) asparagine glycans are attached at residues Asn35, Asn60, Asn69, Asn153, Asn177, and Asn246.

Belongs to the protein kinase superfamily. Ser/Thr protein kinase family. CRK subfamily.

The protein localises to the secreted. This Arabidopsis thaliana (Mouse-ear cress) protein is Putative cysteine-rich receptor-like protein kinase 9 (CRK9).